A 339-amino-acid polypeptide reads, in one-letter code: Ketol-acid reductoisomerase (NADP(+)) (339 aa).

One can recognise a KARI N-terminal Rossmann domain in the interval M1–T182. NADP(+) contacts are provided by residues Y24 to Q27, R48, S51, T53, and D83 to Q86. The active site involves H108. Position 134 (G134) interacts with NADP(+). The region spanning T183–I328 is the KARI C-terminal knotted domain. The Mg(2+) site is built by D191, E195, E227, and E231. S252 is a substrate binding site.

It belongs to the ketol-acid reductoisomerase family. Mg(2+) is required as a cofactor.

The enzyme catalyses (2R)-2,3-dihydroxy-3-methylbutanoate + NADP(+) = (2S)-2-acetolactate + NADPH + H(+). It carries out the reaction (2R,3R)-2,3-dihydroxy-3-methylpentanoate + NADP(+) = (S)-2-ethyl-2-hydroxy-3-oxobutanoate + NADPH + H(+). Its pathway is amino-acid biosynthesis; L-isoleucine biosynthesis; L-isoleucine from 2-oxobutanoate: step 2/4. It functions in the pathway amino-acid biosynthesis; L-valine biosynthesis; L-valine from pyruvate: step 2/4. Functionally, involved in the biosynthesis of branched-chain amino acids (BCAA). Catalyzes an alkyl-migration followed by a ketol-acid reduction of (S)-2-acetolactate (S2AL) to yield (R)-2,3-dihydroxy-isovalerate. In the isomerase reaction, S2AL is rearranged via a Mg-dependent methyl migration to produce 3-hydroxy-3-methyl-2-ketobutyrate (HMKB). In the reductase reaction, this 2-ketoacid undergoes a metal-dependent reduction by NADPH to yield (R)-2,3-dihydroxy-isovalerate. In Brucella anthropi (strain ATCC 49188 / DSM 6882 / CCUG 24695 / JCM 21032 / LMG 3331 / NBRC 15819 / NCTC 12168 / Alc 37) (Ochrobactrum anthropi), this protein is Ketol-acid reductoisomerase (NADP(+)).